The primary structure comprises 204 residues: Twist-related protein 1 (204 aa).

Residues 1 to 18 (MMQDVSSSPVSPADDSLS) show a composition bias toward low complexity. A disordered region spans residues 1-107 (MMQDVSSSPV…GGGSPQSYEE (107 aa)). Over residues 34–43 (RGGRKRRSSR) the composition is skewed to basic residues. Gly residues-rich tracts occupy residues 46-65 (AGGGAGPGGAAGGGVGGGDE) and 80-101 (GCGGGGSAGGGGGGGSSSGGGS). Residues 110–161 (TQRVMANVRERQRTQSLNEAFAALRKIIPTLPSDKLSKIQTLKLAARYIDFL) enclose the bHLH domain. The tract at residues 163–193 (QVLQSDELDSKMASCSYVAHERFSYAFSVWR) is sufficient for transactivation activity.

Efficient DNA binding requires dimerization with another bHLH protein. Homodimer or heterodimer with E proteins such as TCF3. ID1 binds preferentially to TCF3 but does not interact efficiently with TWIST1 so ID1 levels control the amount of TCF3 available to dimerize with TWIST and thus determine the type of dimer formed.

Its subcellular location is the nucleus. Acts as a transcriptional regulator. Inhibits myogenesis by sequestrating E proteins, inhibiting trans-activation by MEF2, and inhibiting DNA-binding by MYOD1 through physical interaction. This interaction probably involves the basic domains of both proteins. Also represses expression of pro-inflammatory cytokines such as TNFA and IL1B. Regulates cranial suture patterning and fusion. Activates transcription as a heterodimer with E proteins. Regulates gene expression differentially, depending on dimer composition. Homodimers induce expression of FGFR2 and POSTN while heterodimers repress FGFR2 and POSTN expression and induce THBS1 expression. Heterodimerization is also required for osteoblast differentiation. Represses the activity of the circadian transcriptional activator: NPAS2-BMAL1 heterodimer. In Nomascus concolor (Black crested gibbon), this protein is Twist-related protein 1 (TWIST1).